The primary structure comprises 326 residues: DNA-directed RNA polymerase subunit alpha (326 aa).

The alpha N-terminal domain (alpha-NTD) stretch occupies residues 1-231; that stretch reads MQTALLKPKI…DQLSVFAALE (231 aa). An alpha C-terminal domain (alpha-CTD) region spans residues 247-326; that stretch reads IDPILLRPVD…ENWPPAGLEK (80 aa).

The protein belongs to the RNA polymerase alpha chain family. In terms of assembly, homodimer. The RNAP catalytic core consists of 2 alpha, 1 beta, 1 beta' and 1 omega subunit. When a sigma factor is associated with the core the holoenzyme is formed, which can initiate transcription.

The catalysed reaction is RNA(n) + a ribonucleoside 5'-triphosphate = RNA(n+1) + diphosphate. In terms of biological role, DNA-dependent RNA polymerase catalyzes the transcription of DNA into RNA using the four ribonucleoside triphosphates as substrates. In Cupriavidus metallidurans (strain ATCC 43123 / DSM 2839 / NBRC 102507 / CH34) (Ralstonia metallidurans), this protein is DNA-directed RNA polymerase subunit alpha.